A 470-amino-acid polypeptide reads, in one-letter code: MSQAYSSSQRVSSYRRTFGGAPSFPLGSPLSSPVFPRAGFGTKGSSSSVTSRVYQVSRTSGGAGGLGALRASRLGSTRVPSSYGAGELLDFSLADAVNQEFLTTRTNEKVELQELNDRFANYIEKVRFLEQQNAALAAEVNRLKGREPTRVAEIYEEELRELRRQVEVLTNQRARVDVERDNLLDDLQRLKAKLQEEIQLKEEAENNLAAFRADVDAATLARIDLERRIESLNEEIAFLKKVHEEEIRELQAQLQEQQVQVEMDMSKPDLTAALRDIRAQYETIAAKNISEAEEWYKSKVSDLTQAANKNNDALRQAKQEMMEYRHQIQSYTCEIDALKGTNDSLMRQMRELEDRFASEASGYQDNIARLEEEIRHLKDEMARHLREYQDLLNVKMALDVEIATYRKLLEGEESRINLPIQTFSALNFRETSPEQRGSEVHTKKTVMIKTIETRDGEVVSEATQQQHEVL.

The head stretch occupies residues 2–108 (SQAYSSSQRV…QEFLTTRTNE (107 aa)). Phosphoserine; by CDK1 is present on serine 7. The residue at position 12 (serine 12) is a Phosphoserine; by AURKB. Position 16 is an omega-N-methylarginine (arginine 16). Position 17 is a phosphothreonine; by AURKB and ROCK1 (threonine 17). Serine 28 carries the phosphoserine; by CDK1 modification. At serine 31 the chain carries Phosphoserine. Phosphoserine; by CDK1 is present on serine 32. Arginine 37 is subject to Asymmetric dimethylarginine; alternate. An Omega-N-methylarginine; alternate modification is found at arginine 37. A Phosphoserine modification is found at serine 45. Position 58 is an ADP-ribosylarginine (arginine 58). Serine 60 is modified (phosphoserine; by AURKB). An Omega-N-methylarginine modification is found at arginine 70. Threonine 77 bears the Phosphothreonine; by ROCK1 mark. A Phosphoserine modification is found at serine 81. Residues 108–416 (EKVELQELND…KLLEGEESRI (309 aa)) form the IF rod domain. The coil 1A stretch occupies residues 109–141 (KVELQELNDRFANYIEKVRFLEQQNAALAAEVN). Residues 142–151 (RLKGREPTRV) form a linker 1 region. The tract at residues 152-252 (AEIYEEELRE…HEEEIRELQA (101 aa)) is coil 1B. The tract at residues 253-268 (QLQEQQVQVEMDMSKP) is linker 12. The interval 268-415 (PDLTAALRDI…RKLLEGEESR (148 aa)) is interaction with NEB. The segment at 269 to 287 (DLTAALRDIRAQYETIAAK) is coil 2A. The segment at 288–295 (NISEAEEW) is linker 2. 4 positions are modified to phosphoserine: serine 290, serine 358, serine 361, and serine 424. Positions 296 to 412 (YKSKVSDLTQ…ATYRKLLEGE (117 aa)) are coil 2B. The interval 413–470 (ESRINLPIQTFSALNFRETSPEQRGSEVHTKKTVMIKTIETRDGEVVSEATQQQHEVL) is tail. The segment at 438–453 (SEVHTKKTVMIKTIET) is interaction with CRYAB.

Belongs to the intermediate filament family. In terms of assembly, homomer. Interacts with DST. Interacts with MTM1. Interacts with EPPK1; interaction is dependent of higher-order structure of intermediate filament. Interacts with CRYAB. Interacts with NEB (via nebulin repeats 160-164). Interacts (via rod region) with NEBL (via nebulin repeats 1-5). Interacts with ASB2; the interaction targets DES for proteasomal degradation. Interacts with PKP1. Interacts with FLII. ADP-ribosylation prevents ability to form intermediate filaments. Post-translationally, phosphorylation at Ser-7, Ser-28 and Ser-32 by CDK1 and phosphorylation at Ser-60 by AURKB contribute to efficient separation of desmin intermediate filaments during mitosis. In terms of processing, ubiquitination by a SCF-like complex containing ASB2 leads to proteasomal degradation.

The protein localises to the cytoplasm. The protein resides in the myofibril. Its subcellular location is the sarcomere. It localises to the z line. It is found in the cell membrane. The protein localises to the sarcolemma. The protein resides in the nucleus. Its subcellular location is the cell tip. It localises to the nucleus envelope. Muscle-specific type III intermediate filament essential for proper muscular structure and function. Plays a crucial role in maintaining the structure of sarcomeres, inter-connecting the Z-disks and forming the myofibrils, linking them not only to the sarcolemmal cytoskeleton, but also to the nucleus and mitochondria, thus providing strength for the muscle fiber during activity. In adult striated muscle they form a fibrous network connecting myofibrils to each other and to the plasma membrane from the periphery of the Z-line structures. May act as a sarcomeric microtubule-anchoring protein: specifically associates with detyrosinated tubulin-alpha chains, leading to buckled microtubules and mechanical resistance to contraction. Required for nuclear membrane integrity, via anchoring at the cell tip and nuclear envelope, resulting in maintenance of microtubule-derived intracellular mechanical forces. Contributes to the transcriptional regulation of the NKX2-5 gene in cardiac progenitor cells during a short period of cardiomyogenesis and in cardiac side population stem cells in the adult. Plays a role in maintaining an optimal conformation of nebulette (NEB) on heart muscle sarcomeres to bind and recruit cardiac alpha-actin. The sequence is that of Desmin (DES) from Bos taurus (Bovine).